The chain runs to 137 residues: Small ribosomal subunit protein eS19 (137 aa).

It belongs to the eukaryotic ribosomal protein eS19 family. As to quaternary structure, component of the small ribosomal subunit.

Its subcellular location is the cytoplasm. The protein is Small ribosomal subunit protein eS19 (RPS19) of Encephalitozoon cuniculi (strain GB-M1) (Microsporidian parasite).